The primary structure comprises 515 residues: Centromere protein T (515 aa).

Disordered regions lie at residues 24 to 156 (ADSR…KRKQ) and 271 to 411 (LSGK…DPHK). Positions 29–44 (PMRRRSTRINAQRRRS) are enriched in basic residues. The segment covering 45–58 (QTPYSNRQGSQTKT) has biased composition (polar residues). Phosphothreonine is present on T86. The segment at 94–375 (ILLTAPESST…DSLPAEQPPP (282 aa)) is flexible stalk domain. Over residues 296–306 (SSGTRLQSRMS) the composition is skewed to polar residues. 6 positions are modified to phosphoserine: S313, S333, S345, S346, S357, and S376.

It belongs to the CENP-T/CNN1 family. Component of the CENPA-CAD complex, composed of CENPI, CENPK, CENPL, CENPO, CENPP, CENPQ, CENPR and CENPS. The CENPA-CAD complex is probably recruited on centromeres by the CENPA-NAC complex, at least composed of CENPA, CENPC, CENPH, CENPM, CENPN, CENPT and CENPU. Identified in a centromeric complex containing histones H2A, H2B, H3 and H4, and at least CENPA, CENPB, CENPC, CENPT, CENPN, HJURP, SUPT16H, SSRP1 and RSF1. Interacts (via N-terminus) with the NDC80 complex. Heterodimer with CENPW; this dimer coassembles with CENPS-CENPX heterodimers at centromeres to form the tetrameric CENP-T-W-S-X complex. Post-translationally, dynamically phosphorylated during the cell cycle. Phosphorylated during G2 phase, metaphase and anaphase, but not during telophase or G1 phase.

The protein resides in the nucleus. Its subcellular location is the chromosome. It localises to the centromere. It is found in the kinetochore. Functionally, component of the CENPA-NAC (nucleosome-associated) complex, a complex that plays a central role in assembly of kinetochore proteins, mitotic progression and chromosome segregation. The CENPA-NAC complex recruits the CENPA-CAD (nucleosome distal) complex and may be involved in incorporation of newly synthesized CENPA into centromeres. Part of a nucleosome-associated complex that binds specifically to histone H3-containing nucleosomes at the centromere, as opposed to nucleosomes containing CENPA. Component of the heterotetrameric CENP-T-W-S-X complex that binds and supercoils DNA, and plays an important role in kinetochore assembly. CENPT has a fundamental role in kinetochore assembly and function. It is one of the inner kinetochore proteins, with most further proteins binding downstream. Required for normal chromosome organization and normal progress through mitosis. In Mus musculus (Mouse), this protein is Centromere protein T (Cenpt).